The primary structure comprises 156 residues: Small ribosomal subunit protein uS7 (156 aa).

Belongs to the universal ribosomal protein uS7 family. In terms of assembly, part of the 30S ribosomal subunit. Contacts proteins S9 and S11.

One of the primary rRNA binding proteins, it binds directly to 16S rRNA where it nucleates assembly of the head domain of the 30S subunit. Is located at the subunit interface close to the decoding center, probably blocks exit of the E-site tRNA. In Methylocella silvestris (strain DSM 15510 / CIP 108128 / LMG 27833 / NCIMB 13906 / BL2), this protein is Small ribosomal subunit protein uS7.